The following is a 295-amino-acid chain: tRNA pseudouridine synthase B (295 aa).

Residue D42 is the Nucleophile of the active site.

Belongs to the pseudouridine synthase TruB family. Type 1 subfamily.

It catalyses the reaction uridine(55) in tRNA = pseudouridine(55) in tRNA. Responsible for synthesis of pseudouridine from uracil-55 in the psi GC loop of transfer RNAs. The chain is tRNA pseudouridine synthase B from Cutibacterium acnes (strain DSM 16379 / KPA171202) (Propionibacterium acnes).